A 334-amino-acid chain; its full sequence is Leucine-rich repeat-containing protein 39 (334 aa).

LRR repeat units lie at residues 59–82 (EDGR…LLKL), 83–105 (NQLQ…IGRF), 106–128 (QHLI…IGLL), 129–151 (TRLQ…LSNC), 153–175 (SLEK…LSKL), 176–198 (LKLT…VLDM), 199–221 (PALE…LDRM), 223–244 (SLHT…IRNM), 245–269 (KNLG…EMTS), and 272–295 (FVNF…VDGE).

Interacts with MYH7 (via C-terminus). Expressed in heart and skeletal muscle (at protein level). Also detected in kidney (at protein level). Not detected in other tissues tested (at protein level).

The protein localises to the cytoplasm. It is found in the myofibril. It localises to the sarcomere. The protein resides in the m line. In terms of biological role, component of the sarcomeric M-band which plays a role in myocyte response to biomechanical stress. May regulate expression of other M-band proteins via an SRF-dependent pathway. Important for normal contractile function in heart. This Rattus norvegicus (Rat) protein is Leucine-rich repeat-containing protein 39.